A 146-amino-acid chain; its full sequence is Hemoglobin subunit beta (146 aa).

Val-1 is modified (N-acetylvaline). The Globin domain occupies 2–146; that stretch reads HLTGEEKAAV…VANALAHKYH (145 aa). Thr-12 bears the Phosphothreonine mark. Ser-44 bears the Phosphoserine mark. Lys-59 bears the N6-acetyllysine mark. His-63 serves as a coordination point for heme b. An N6-acetyllysine modification is found at Lys-82. His-92 provides a ligand contact to heme b. Position 93 is an S-nitrosocysteine (Cys-93). Lys-144 carries the post-translational modification N6-acetyllysine.

The protein belongs to the globin family. As to quaternary structure, heterotetramer of two alpha chains and two beta chains. Red blood cells.

Involved in oxygen transport from the lung to the various peripheral tissues. This chain is Hemoglobin subunit beta (HBB), found in Lutra lutra (European river otter).